Here is a 314-residue protein sequence, read N- to C-terminus: tRNA pseudouridine synthase B (314 aa).

Residue Asp-47 is the Nucleophile of the active site.

The protein belongs to the pseudouridine synthase TruB family. Type 1 subfamily.

It catalyses the reaction uridine(55) in tRNA = pseudouridine(55) in tRNA. Its function is as follows. Responsible for synthesis of pseudouridine from uracil-55 in the psi GC loop of transfer RNAs. This is tRNA pseudouridine synthase B from Vibrio vulnificus (strain CMCP6).